The sequence spans 219 residues: Charged multivesicular body protein 5 (219 aa).

Residues methionine 1–proline 10 show a composition bias toward basic residues. Residues methionine 1–isoleucine 21 form a disordered region. Residues serine 26–aspartate 179 adopt a coiled-coil conformation. A Phosphoserine modification is found at serine 86. The tract at residues serine 188–serine 219 is disordered.

Belongs to the SNF7 family. In terms of assembly, probable peripherally associated component of the endosomal sorting required for transport complex III (ESCRT-III). ESCRT-III components are thought to multimerize to form a flat lattice on the perimeter membrane of the endosome. Several assembly forms of ESCRT-III may exist that interact and act sequentially. Interacts with VTA1. Interacts with CHMP2A. Interacts with VTA1; the interaction involves soluble CHMP5. Interacts with NOD2. Interacts with BROX. ISGylated. Isgylation inhibits its interaction with VTA1.

The protein localises to the cytoplasm. The protein resides in the cytosol. Its subcellular location is the endosome membrane. It localises to the midbody. Its function is as follows. Probable peripherally associated component of the endosomal sorting required for transport complex III (ESCRT-III) which is involved in multivesicular bodies (MVBs) formation and sorting of endosomal cargo proteins into MVBs. MVBs contain intraluminal vesicles (ILVs) that are generated by invagination and scission from the limiting membrane of the endosome and mostly are delivered to lysosomes enabling degradation of membrane proteins, such as stimulated growth factor receptors, lysosomal enzymes and lipids. The MVB pathway appears to require the sequential function of ESCRT-O, -I,-II and -III complexes. ESCRT-III proteins mostly dissociate from the invaginating membrane before the ILV is released. The ESCRT machinery also functions in topologically equivalent membrane fission events, such as the terminal stages of cytokinesis. ESCRT-III proteins are believed to mediate the necessary vesicle extrusion and/or membrane fission activities, possibly in conjunction with the AAA ATPase VPS4. This chain is Charged multivesicular body protein 5 (Chmp5), found in Mus musculus (Mouse).